The sequence spans 723 residues: MGKKKQEEEQNSSEYGAPAQYDPTFNGPIHKRSCTDIICCVLFMLVITGYMVVGILAWLYGDPRHVLYPRNSTGMFCGIGQNQNKPSVLYFDILKCATATNIMAAALQGLQCPTTQVCVSSCPSGFWALSPLAYLPNAKPADYFQQELCVPSLQLKDTTYTVMEIINKELCPYYYTPTTSVLDRCLPSLGGSAYNPSNIPANFSLPGLSINQTLSTIANATSDLTNSFNMKDVGLRIFEDFAKTWQWIVAGLVIAMVVSVLFLLLLRFTAPVLIWILIFGVLAVGAFGIWYCYNDYMSLASSNLTFSNVGFTTNVQVYLQVRDTWLAFLIILCIVEAVLILALIFLRTRILIAIALIQETSKALGHMMSTLLYPVVTFVLLLVCVSYWGITALYLATSGAPIYKVVALNTTQGDCSNIQANQTCDPQTFNSSRYSSCPSARCVFINYNTEGLFQRNLFNLQIYNVVAFLWCVNFVIALGHCTLAGAFASYYWAFSKPADIPTFPLTQSFMRALRYHVGSLAFGALILTLVQIVRIILEYLDHKFKAAQNPCARFLMCCLKCCFWCLEKFIKFINRNAYIMIAIYGKNFCVSAKNAFFLLMRNIVRVVVLDKVTDLLLFFGKLLVVGGIGVLAFFFFSGRIQLPGNTFQTAALNYYWMPIITVVFGAYLIAHGFFSVYNMGVDTLFLCFLEDLERNDGSAEKPYFMSKNLMKILNKKNKQPKTG.

Topologically, residues 1 to 36 are cytoplasmic; sequence MGKKKQEEEQNSSEYGAPAQYDPTFNGPIHKRSCTD. Residues 37–57 traverse the membrane as a helical segment; sequence IICCVLFMLVITGYMVVGILA. Over 58-245 the chain is Extracellular; sequence WLYGDPRHVL…RIFEDFAKTW (188 aa). N-linked (GlcNAc...) asparagine glycosylation is found at asparagine 71, asparagine 202, asparagine 211, and asparagine 219. The helical transmembrane segment at 246–266 threads the bilayer; sequence QWIVAGLVIAMVVSVLFLLLL. The Cytoplasmic segment spans residues 267-269; it reads RFT. Residues 270–290 traverse the membrane as a helical segment; that stretch reads APVLIWILIFGVLAVGAFGIW. The Extracellular segment spans residues 291–325; it reads YCYNDYMSLASSNLTFSNVGFTTNVQVYLQVRDTW. Residue asparagine 303 is glycosylated (N-linked (GlcNAc...) asparagine). The chain crosses the membrane as a helical span at residues 326–346; it reads LAFLIILCIVEAVLILALIFL. Residues 347–374 lie on the Cytoplasmic side of the membrane; sequence RTRILIAIALIQETSKALGHMMSTLLYP. The helical transmembrane segment at 375–395 threads the bilayer; it reads VVTFVLLLVCVSYWGITALYL. Residues 396-464 are Extracellular-facing; sequence ATSGAPIYKV…RNLFNLQIYN (69 aa). N-linked (GlcNAc...) asparagine glycosylation is found at asparagine 409, asparagine 421, and asparagine 430. Residues 465–485 traverse the membrane as a helical segment; the sequence is VVAFLWCVNFVIALGHCTLAG. The Cytoplasmic portion of the chain corresponds to 486-516; that stretch reads AFASYYWAFSKPADIPTFPLTQSFMRALRYH. The helical transmembrane segment at 517–537 threads the bilayer; sequence VGSLAFGALILTLVQIVRIIL. The Extracellular segment spans residues 538–578; sequence EYLDHKFKAAQNPCARFLMCCLKCCFWCLEKFIKFINRNAY. A helical transmembrane segment spans residues 579 to 599; the sequence is IMIAIYGKNFCVSAKNAFFLL. The Cytoplasmic portion of the chain corresponds to 600 to 615; the sequence is MRNIVRVVVLDKVTDL. A helical transmembrane segment spans residues 616–636; sequence LLFFGKLLVVGGIGVLAFFFF. Residues 637-655 are Extracellular-facing; sequence SGRIQLPGNTFQTAALNYY. The chain crosses the membrane as a helical span at residues 656–676; the sequence is WMPIITVVFGAYLIAHGFFSV. Residues 677–723 lie on the Cytoplasmic side of the membrane; the sequence is YNMGVDTLFLCFLEDLERNDGSAEKPYFMSKNLMKILNKKNKQPKTG.

The protein belongs to the CTL (choline transporter-like) family.

Its subcellular location is the membrane. It localises to the apical cell membrane. The catalysed reaction is choline(out) + n H(+)(in) = choline(in) + n H(+)(out). It catalyses the reaction thiamine diphosphate(out) = thiamine diphosphate(in). Functionally, choline transporter that seems to play a role in the choline-acetylcholine system and is required to the efferent innervation of hair cells in the olivocochlear bundle for the maintenance of physiological function of outer hair cells and the protection of hair cells from acoustic injury. Also described as a thiamine pyrophosphate transporter. This chain is Choline transporter-like protein 4 (slc44a4), found in Danio rerio (Zebrafish).